A 442-amino-acid chain; its full sequence is Zuotin (442 aa).

A disordered region spans residues 49–84; the sequence is RQRHGRTFSEDERLEVKNKVQEEVKEESEDEEEDPA. Threonine 55 carries the phosphothreonine modification. Basic and acidic residues predominate over residues 55-71; it reads TFSEDERLEVKNKVQEE. 2 positions are modified to phosphoserine: serine 57 and serine 76. Positions 72 to 83 are enriched in acidic residues; the sequence is VKEESEDEEEDP. The J domain occupies 97–167; sequence DHYAVLGLSK…VRRRQFDSVD (71 aa). Disordered regions lie at residues 242–270 and 306–331; these read DGESRDNKRFQEKKNRSERQKNKARDNAR and GAREAAAAAQKKKEEEERRAAEEAAA. Residues 316 to 330 are compositionally biased toward basic and acidic residues; sequence KKKEEEERRAAEEAA.

RAC is a heterodimer of the Hsp70/DnaK-type chaperone ssz1 and the Hsp40/DnaJ-type chaperone zuo1. RAC associates with ribosomes via zuo1.

The protein resides in the cytoplasm. In terms of biological role, component of the ribosome-associated complex (RAC), a heterodimeric chaperone complex involved in regulation of accurate translation termination and in folding or maintaining nascent polypeptides in a folding-competent state. RAC stimulates the ATPase activity of the ribosome-associated pool of Hsp70-type chaperones SSB1/SSB2 that bind to the nascent polypeptide chain. The sequence is that of Zuotin (zuo1) from Schizosaccharomyces pombe (strain 972 / ATCC 24843) (Fission yeast).